A 338-amino-acid chain; its full sequence is Protein REG2 (338 aa).

Positions 1-21 (MTLSNCDSLDNLFQDPPEEEE) are disordered.

Regulatory subunit, binds to type-1 protein phosphatase. Functions with HEX2/REG1 and SNF1 protein kinase to regulate growth. Might regulate SNF1 directly or indirectly. This Saccharomyces cerevisiae (strain ATCC 204508 / S288c) (Baker's yeast) protein is Protein REG2 (REG2).